Consider the following 311-residue polypeptide: Metal-staphylopine import system permease protein CntB (311 aa).

The next 6 helical transmembrane spans lie at 9–29, 105–125, 139–159, 173–193, 237–257, and 274–294; these read IALMFPLVIVVSFMTFLLTYI, LTIISSVMVMITSIILGVVSA, VAFFLTALPSYWIASILIIYV, GPESYILPVIVITIAYAGIYF, IFCMSIPMIMGGLVVIEYIFA, and FPVIQAYVLIVAVLFIVFNTL. The region spanning 99–295 is the ABC transmembrane type-1 domain; it reads FMNTLKLTII…VLFIVFNTLA (197 aa).

The protein belongs to the binding-protein-dependent transport system permease family. In terms of assembly, the complex is composed of two ATP-binding proteins (CntD and CntF), two transmembrane proteins (CntB and CntC) and a solute-binding protein (CntA).

It localises to the cell membrane. Part of the ABC transporter complex CntABCDF (Opp1) involved in the uptake of metal in complex with the metallophore staphylopine (StP). May be involved in the import of a large array of divalent metals ions such as nickel, cobalt, zinc, copper and iron. Probably responsible for the translocation of the substrate across the membrane. The polypeptide is Metal-staphylopine import system permease protein CntB (Staphylococcus aureus (strain Mu50 / ATCC 700699)).